The following is a 307-amino-acid chain: 4-hydroxythreonine-4-phosphate dehydrogenase (307 aa).

The substrate site is built by His-126 and Thr-127. A divalent metal cation-binding residues include His-156, His-195, and His-251. Residues Lys-259, Asn-268, and Arg-277 each coordinate substrate.

This sequence belongs to the PdxA family. Homodimer. Zn(2+) serves as cofactor. It depends on Mg(2+) as a cofactor. Co(2+) is required as a cofactor.

The protein resides in the cytoplasm. It carries out the reaction 4-(phosphooxy)-L-threonine + NAD(+) = 3-amino-2-oxopropyl phosphate + CO2 + NADH. The protein operates within cofactor biosynthesis; pyridoxine 5'-phosphate biosynthesis; pyridoxine 5'-phosphate from D-erythrose 4-phosphate: step 4/5. Its function is as follows. Catalyzes the NAD(P)-dependent oxidation of 4-(phosphooxy)-L-threonine (HTP) into 2-amino-3-oxo-4-(phosphooxy)butyric acid which spontaneously decarboxylates to form 3-amino-2-oxopropyl phosphate (AHAP). The protein is 4-hydroxythreonine-4-phosphate dehydrogenase of Helicobacter pylori (strain P12).